The primary structure comprises 191 residues: ATP synthase subunit b (191 aa).

A helical membrane pass occupies residues 10–30 (FLVPGPTAIAELIVFLLILFI). The segment at 170–191 (RAQRQPAASDVVGGQQREEVHR) is disordered.

The protein belongs to the ATPase B chain family. F-type ATPases have 2 components, F(1) - the catalytic core - and F(0) - the membrane proton channel. F(1) has five subunits: alpha(3), beta(3), gamma(1), delta(1), epsilon(1). F(0) has three main subunits: a(1), b(2) and c(10-14). The alpha and beta chains form an alternating ring which encloses part of the gamma chain. F(1) is attached to F(0) by a central stalk formed by the gamma and epsilon chains, while a peripheral stalk is formed by the delta and b chains.

It localises to the cell membrane. F(1)F(0) ATP synthase produces ATP from ADP in the presence of a proton or sodium gradient. F-type ATPases consist of two structural domains, F(1) containing the extramembraneous catalytic core and F(0) containing the membrane proton channel, linked together by a central stalk and a peripheral stalk. During catalysis, ATP synthesis in the catalytic domain of F(1) is coupled via a rotary mechanism of the central stalk subunits to proton translocation. Its function is as follows. Component of the F(0) channel, it forms part of the peripheral stalk, linking F(1) to F(0). The sequence is that of ATP synthase subunit b from Acidothermus cellulolyticus (strain ATCC 43068 / DSM 8971 / 11B).